The primary structure comprises 287 residues: tRNA (guanine(9)-N1)-methyltransferase (287 aa).

The segment at 1–27 is disordered; it reads MSDTSDLVDGKWQRLPPVPEGMSKSQW. An SAM-dependent MTase TRM10-type domain is found at 79–272; sequence EPRVNRDQVA…SVIPSRKLDP (194 aa). S-adenosyl-L-methionine is bound by residues 179 to 180, glycine 199, 203 to 207, cysteine 211, leucine 225, and 237 to 239; these read LT, DKNRH, and KVL. Aspartate 203 acts as the Proton acceptor in catalysis. Over residues 268 to 278 the composition is skewed to basic and acidic residues; it reads RKLDPVKEKEQ. Residues 268 to 287 are disordered; that stretch reads RKLDPVKEKEQQQQQQQQQQ.

The protein belongs to the class IV-like SAM-binding methyltransferase superfamily. TRM10 family. Monomer.

The protein localises to the cytoplasm. The protein resides in the nucleus. The enzyme catalyses guanosine(9) in tRNA + S-adenosyl-L-methionine = N(1)-methylguanosine(9) in tRNA + S-adenosyl-L-homocysteine + H(+). Its function is as follows. S-adenosyl-L-methionine-dependent guanine N(1)-methyltransferase that catalyzes the formation of N(1)-methylguanine at position 9 (m1G9) in cytoplasmic tRNA. The sequence is that of tRNA (guanine(9)-N1)-methyltransferase from Candida glabrata (strain ATCC 2001 / BCRC 20586 / JCM 3761 / NBRC 0622 / NRRL Y-65 / CBS 138) (Yeast).